The following is a 285-amino-acid chain: Polyamine aminopropyltransferase (285 aa).

The 234-residue stretch at 5–238 (EMWYETLHTG…GIMTFAWASD (234 aa)) folds into the PABS domain. Glutamine 33 contacts S-methyl-5'-thioadenosine. Spermidine-binding residues include histidine 64 and aspartate 88. S-methyl-5'-thioadenosine is bound by residues glutamate 108 and 140–141 (DG). Aspartate 158 (proton acceptor) is an active-site residue. 158 to 161 (DCTD) serves as a coordination point for spermidine. Position 165 (proline 165) interacts with S-methyl-5'-thioadenosine.

This sequence belongs to the spermidine/spermine synthase family. In terms of assembly, homodimer or homotetramer.

Its subcellular location is the cytoplasm. The enzyme catalyses S-adenosyl 3-(methylsulfanyl)propylamine + putrescine = S-methyl-5'-thioadenosine + spermidine + H(+). It participates in amine and polyamine biosynthesis; spermidine biosynthesis; spermidine from putrescine: step 1/1. Functionally, catalyzes the irreversible transfer of a propylamine group from the amino donor S-adenosylmethioninamine (decarboxy-AdoMet) to putrescine (1,4-diaminobutane) to yield spermidine. This Erwinia tasmaniensis (strain DSM 17950 / CFBP 7177 / CIP 109463 / NCPPB 4357 / Et1/99) protein is Polyamine aminopropyltransferase.